Here is a 718-residue protein sequence, read N- to C-terminus: uncharacterized protein (718 aa).

The next 6 helical transmembrane spans lie at 9–29 (VIST…IWFF), 60–80 (NVFF…LHIG), 83–103 (IQYI…GAVG), 136–156 (VMIL…YLFF), 391–411 (IVVF…GYWI), and 506–526 (LLDT…LWPD).

Belongs to the YccS/YhfK family.

It is found in the cell membrane. This is an uncharacterized protein from Haemophilus influenzae (strain ATCC 51907 / DSM 11121 / KW20 / Rd).